Reading from the N-terminus, the 574-residue chain is Methionine--tRNA ligase (574 aa).

The 'HIGH' region signature appears at proline 11–asparagine 21. Zn(2+) is bound by residues cysteine 143, cysteine 146, cysteine 156, and cysteine 159. Positions lysine 345–serine 349 match the 'KMSKS' region motif. Position 348 (threonine 348) interacts with ATP.

Belongs to the class-I aminoacyl-tRNA synthetase family. MetG type 1 subfamily. As to quaternary structure, monomer. It depends on Zn(2+) as a cofactor.

The protein resides in the cytoplasm. It catalyses the reaction tRNA(Met) + L-methionine + ATP = L-methionyl-tRNA(Met) + AMP + diphosphate. Is required not only for elongation of protein synthesis but also for the initiation of all mRNA translation through initiator tRNA(fMet) aminoacylation. This chain is Methionine--tRNA ligase, found in Streptomyces avermitilis (strain ATCC 31267 / DSM 46492 / JCM 5070 / NBRC 14893 / NCIMB 12804 / NRRL 8165 / MA-4680).